The sequence spans 204 residues: Somatotropin (204 aa).

The N-terminal stretch at 1-17 (MDRAILLLSVVCLVVSS) is a signal peptide. Gln18 is modified (pyrrolidone carboxylic acid). Zn(2+) is bound at residue His36. A disulfide bond links Cys69 and Cys177. Glu186 lines the Zn(2+) pocket. Cys194 and Cys202 form a disulfide bridge.

This sequence belongs to the somatotropin/prolactin family.

It localises to the secreted. Growth hormone plays an important role in growth control and is involved in the regulation of several anabolic processes. Implicated as an osmoregulatory substance important for seawater adaptation. This chain is Somatotropin (gh), found in Odontesthes argentinensis (Marine silverside).